The chain runs to 76 residues: Toxin Acra III-1 (76 aa).

One can recognise an LCN-type CS-alpha/beta domain in the interval 4-67; sequence PGNYPLDTRG…IWDAVKNHCT (64 aa). Disulfide bonds link Cys18–Cys41, Cys27–Cys46, and Cys31–Cys48.

Belongs to the long (3 C-C) scorpion toxin superfamily. Sodium channel inhibitor family. Beta subfamily. As to expression, expressed by the venom gland.

It localises to the secreted. Binds to sodium channels (Nav) and affects the channel activation process. This chain is Toxin Acra III-1, found in Androctonus crassicauda (Arabian fat-tailed scorpion).